Here is a 254-residue protein sequence, read N- to C-terminus: 7-cyano-7-deazaguanine synthase (254 aa).

Position 30–40 (30–40) interacts with ATP; the sequence is YSGGQDSATCL. Zn(2+)-binding residues include Cys-218, Cys-233, Cys-236, and Cys-239.

The protein belongs to the QueC family. Zn(2+) is required as a cofactor.

It carries out the reaction 7-carboxy-7-deazaguanine + NH4(+) + ATP = 7-cyano-7-deazaguanine + ADP + phosphate + H2O + H(+). Its pathway is purine metabolism; 7-cyano-7-deazaguanine biosynthesis. Catalyzes the ATP-dependent conversion of 7-carboxy-7-deazaguanine (CDG) to 7-cyano-7-deazaguanine (preQ(0)). This is 7-cyano-7-deazaguanine synthase from Zymomonas mobilis subsp. mobilis (strain ATCC 31821 / ZM4 / CP4).